We begin with the raw amino-acid sequence, 200 residues long: Protein DMP7 (200 aa).

4 helical membrane passes run 37-57 (LSNL…PVLT), 69-89 (WLTC…SFTD), 129-149 (ILDF…SMFD), and 167-187 (ILTS…LAFP).

This sequence belongs to the plant DMP1 protein family. As to expression, expressed in leaves, stems, flowers, siliques and roots, especially in the vasculature.

The protein localises to the endoplasmic reticulum membrane. Involved in membrane remodeling. The sequence is that of Protein DMP7 from Arabidopsis thaliana (Mouse-ear cress).